Reading from the N-terminus, the 40-residue chain is Natriuretic peptide PpNP-a (40 aa).

Residues 1-8 (SGSKTANI) constitute a propeptide that is removed on maturation. The disordered stretch occupies residues 1–40 (SGSKTANIGDGCFGVPIDHIGSTSGMGCGSPRPKPTPGGS). A disulfide bond links Cys-12 and Cys-28.

This sequence belongs to the natriuretic peptide family. In terms of tissue distribution, expressed by the venom gland.

It localises to the secreted. Its function is as follows. Snake venom natriuretic peptide that targets both NPR1 and NPR2. Exhibits hypotensive and vasodepressor activities. In Pseudechis porphyriacus (Red-bellied black snake), this protein is Natriuretic peptide PpNP-a.